A 389-amino-acid chain; its full sequence is Probable protein phosphatase 2C 12 (389 aa).

A PPM-type phosphatase domain is found at 42–356 (VASLFSQRGK…DDCSAVCLFL (315 aa)). 2 residues coordinate Mn(2+): D77 and G78. The tract at residues 119 to 145 (AFSDDAAASSSADSSGNSSPQPSASAS) is disordered. Residues 121–145 (SDDAAASSSADSSGNSSPQPSASAS) are compositionally biased toward low complexity. Mn(2+)-binding residues include D301 and D347.

This sequence belongs to the PP2C family. Requires Mg(2+) as cofactor. Mn(2+) is required as a cofactor.

It catalyses the reaction O-phospho-L-seryl-[protein] + H2O = L-seryl-[protein] + phosphate. It carries out the reaction O-phospho-L-threonyl-[protein] + H2O = L-threonyl-[protein] + phosphate. The chain is Probable protein phosphatase 2C 12 from Oryza sativa subsp. japonica (Rice).